Consider the following 174-residue polypeptide: Inactive signal peptidase IA (174 aa).

Over 1 to 7 the chain is Cytoplasmic; that stretch reads MKKVVKY. Residues 8–28 traverse the membrane as a helical segment; that stretch reads LISLILAIIIVLFVQTFVIVG. The Extracellular segment spans residues 29–174; sequence HVIPNNDMSP…FSKWTVQFKS (146 aa).

It belongs to the peptidase S26 family.

Its subcellular location is the cell membrane. Functionally, catalytically inactive. This is Inactive signal peptidase IA (spsA) from Staphylococcus aureus (strain COL).